The sequence spans 202 residues: Small ribosomal subunit protein uS4c (202 aa).

The S4 RNA-binding domain maps to 90–153 (MRLDNVIFRL…KSEAIISKNI (64 aa)).

Belongs to the universal ribosomal protein uS4 family. In terms of assembly, part of the 30S ribosomal subunit. Contacts protein S5. The interaction surface between S4 and S5 is involved in control of translational fidelity.

It localises to the plastid. The protein localises to the chloroplast. Its function is as follows. One of the primary rRNA binding proteins, it binds directly to 16S rRNA where it nucleates assembly of the body of the 30S subunit. In terms of biological role, with S5 and S12 plays an important role in translational accuracy. In Cyathophorum bulbosum (Moss), this protein is Small ribosomal subunit protein uS4c (rps4).